A 440-amino-acid chain; its full sequence is Chorismate synthase 1, chloroplastic (440 aa).

The N-terminal 54 residues, 1-54 (MASFVPTKQFVGASSSSDIGSSRLVSLQLPSKFSSSNFHLPSRPSQLKRLEIQA), are a transit peptide targeting the chloroplast. The tract at residues 100-147 (RRRPGQSRITTPRKETDTCKISSGTADGLTTGSPIKVEVPNTDQRGND) is disordered. The segment covering 118 to 132 (CKISSGTADGLTTGS) has biased composition (polar residues).

Belongs to the chorismate synthase family. Homotetramer. Requires FMNH2 as cofactor. In terms of tissue distribution, predominantly expressed in flowers and roots and, to a lesser extent, in stems, leaves, and cotyledons.

It localises to the plastid. The protein resides in the chloroplast. It catalyses the reaction 5-O-(1-carboxyvinyl)-3-phosphoshikimate = chorismate + phosphate. It participates in metabolic intermediate biosynthesis; chorismate biosynthesis; chorismate from D-erythrose 4-phosphate and phosphoenolpyruvate: step 7/7. In terms of biological role, catalyzes the last common step of the biosynthesis of aromatic amino acids, produced via the shikimic acid pathway. The polypeptide is Chorismate synthase 1, chloroplastic (CS1) (Solanum lycopersicum (Tomato)).